We begin with the raw amino-acid sequence, 216 residues long: Probable GTP-binding protein EngB (216 aa).

The 182-residue stretch at 24-205 (QTPELAFVGR…WARIASAATD (182 aa)) folds into the EngB-type G domain. Residues 32 to 39 (GRSNVGKS), 59 to 63 (GRTRA), 86 to 89 (DLPG), 153 to 156 (TKMD), and 184 to 186 (FSA) each bind GTP. Mg(2+)-binding residues include S39 and T61.

The protein belongs to the TRAFAC class TrmE-Era-EngA-EngB-Septin-like GTPase superfamily. EngB GTPase family. The cofactor is Mg(2+).

In terms of biological role, necessary for normal cell division and for the maintenance of normal septation. The protein is Probable GTP-binding protein EngB of Anaeromyxobacter sp. (strain Fw109-5).